We begin with the raw amino-acid sequence, 333 residues long: Biotin synthase (333 aa).

In terms of domain architecture, Radical SAM core spans 40-269; it reads YRVQLASLLS…HARVRLSAGR (230 aa). [4Fe-4S] cluster is bound by residues Cys55, Cys59, and Cys62. Positions 100, 132, 192, and 264 each coordinate [2Fe-2S] cluster.

This sequence belongs to the radical SAM superfamily. Biotin synthase family. Homodimer. [4Fe-4S] cluster serves as cofactor. [2Fe-2S] cluster is required as a cofactor.

The enzyme catalyses (4R,5S)-dethiobiotin + (sulfur carrier)-SH + 2 reduced [2Fe-2S]-[ferredoxin] + 2 S-adenosyl-L-methionine = (sulfur carrier)-H + biotin + 2 5'-deoxyadenosine + 2 L-methionine + 2 oxidized [2Fe-2S]-[ferredoxin]. Its pathway is cofactor biosynthesis; biotin biosynthesis; biotin from 7,8-diaminononanoate: step 2/2. Its function is as follows. Catalyzes the conversion of dethiobiotin (DTB) to biotin by the insertion of a sulfur atom into dethiobiotin via a radical-based mechanism. The polypeptide is Biotin synthase (Synechococcus sp. (strain CC9902)).